Here is a 464-residue protein sequence, read N- to C-terminus: Calcitonin gene-related peptide type 1 receptor (464 aa).

The signal sequence occupies residues 1–23 (MMDKKCTLCFLFLLLLNMALIAA). Topologically, residues 24–139 (ESEEGANQTD…STHEKVKTAL (116 aa)) are extracellular. Asn-30, Asn-66, Asn-118, Asn-123, Asn-128, and Asn-129 each carry an N-linked (GlcNAc...) asparagine glycan. Intrachain disulfides connect Cys-48–Cys-74, Cys-65–Cys-105, and Cys-88–Cys-127. The chain crosses the membrane as a helical span at residues 140–164 (NLFYLTIIGHGLSIASLIISLIIFF). Over 165-175 (YFKSLSCQRIT) the chain is Cytoplasmic. The helical transmembrane segment at 176 to 198 (LHKNLFFSFVCNSIVTIIHLTAV) threads the bilayer. Over 199-209 (ANNQALVATNP) the chain is Extracellular. Residues 210–238 (VSCKVSQFIHLYLMGCNYFWMLCEGIYLH) traverse the membrane as a helical segment. Topologically, residues 239-252 (TLIVVAVFAEKQHL) are cytoplasmic. The chain crosses the membrane as a helical span at residues 253–273 (MWYYFLGWGFPLLPACIHAIA). Residues 274 to 289 (RSLYYNDNCWISSDTH) lie on the Extracellular side of the membrane. The required for RAMP3 interaction stretch occupies residues 288 to 289 (TH). The chain crosses the membrane as a helical span at residues 290–314 (LLYIIHGPICAALLVNLFFLLNIVR). The Cytoplasmic portion of the chain corresponds to 315-329 (VLITKLKVTHQAESN). The chain crosses the membrane as a helical span at residues 330 to 351 (LYMKAVRATLILVPLLGIEFVL). At 352–366 (FPWRPEGKVAEEVYD) the chain is on the extracellular side. The helical transmembrane segment at 367–387 (YVMHILMHYQGLLVSTIFCFF) threads the bilayer. The Cytoplasmic portion of the chain corresponds to 388–464 (NGEVQAILRR…KPEKMYDLVM (77 aa)). Phosphoserine is present on residues Ser-420 and Ser-445.

Belongs to the G-protein coupled receptor 2 family. As to quaternary structure, heterodimer of CALCRL and RAMP1; the receptor complex functions as CGRP receptor. Heterodimer of CALCRL and RAMP2 or CALCRL and RAMP3; the complexes function as adrenomedullin receptor.

It localises to the cell membrane. Functionally, g protein-coupled receptor which specificity is determined by its interaction with receptor-activity-modifying proteins (RAMPs). Together with RAMP1, form the receptor complex for calcitonin-gene-related peptides CALCA/CGRP1 and CALCB/CGRP2. Together with RAMP2 or RAMP3, function as receptor complexes for adrenomedullin (ADM and ADM2). Ligand binding causes a conformation change that triggers signaling via guanine nucleotide-binding proteins (G proteins) and modulates the activity of downstream effectors. Activates cAMP-dependent pathway. This chain is Calcitonin gene-related peptide type 1 receptor, found in Rattus norvegicus (Rat).